The sequence spans 1186 residues: MAKEDTGVTAPKKPETAQVANINGIDKLEPPKTKEETESSKSVSSEKAAHASDESFKRSIHEASYVGWKQIGGWEDKDELTLDDELMDMTRETFLDNIIPDSLYGDWYHSVAIFFIGGVASFALGHYKFSMGSAFFVIVITSLLYRTSAKKYRGSIRELVQKEFTVQKVENDYESLEWLNAFLDKYWPILEPSVSQLIVQQANEQMATNEAIPKFITQLWIDELTLGVKPPRVDLVKTFQNTASDVVVMDWGISFTPHDLCDMSAKQVRNYVNELAVVKAKIFGITIPVSVSDIAFKAHARVKFKLMTPFPHVETVNIQLLKVPDFDFVATLFGRSIFNWEILAIPGLMTLIQKMAKKYMGPILLPPFSLQLNIPQLLSGSNLSIGILEITVKNAKGLKRTSSILNESIDPYLSFEFNDISIAKTRTVRDTLNPVWDETLYVLLNSFTDPLTISVYDKRAKLKDKVLGRIQYNLNTLHDKTTQRNLKAQFLRNSKPVGELTFDLRFFPTLEEKKLPDGSVEELPDLNTGIAKVVVEEGSRFAEEEQKVTAYVEVYLNAKLVLTTGKATDTGTLKWNSDYEAVIADRRKTRYKFVVKDGKGEEIGSTIQTLNDLIDRSQVNKNLIPLKNQKGDIKITTYWRPVRLEIGSNSVAYTPPIGAIRVFIEKANDLRNLEKFGTIDPYCKVLVNGLSKGRTDFKSQTLNPVWNQVIYVAVTSPNQRITLQCMDVETVNKDRSLGEFNVNVQDLFKKDENDKYEETIDEKAKVGRLVMPKKKPKGTITYYTSFYPALPVLTLEEIQDLDKVNKKKKALELRKSAIDEKKISKEDKAKFDQEWNEVKELEDMYSNRQKLDLPELLQYNQGVLAVTVLNGELPDSGLYVQAFFDDNGHPRFVSPRIPSRIVKNGWSGDVIIKELDKSITTFRVAKNKNYNRVEKCVCEVELPTQELVKNCYYKPSILHLSGEGSAKLMLQISWFPIDTKQLPANDLITNSGDLTIMSRSAENLIASDLNGYSDPYLKYYINNEEDCAYKTKVVKKTLNPKWNDEGTIQINNRLNDVLRIKVMDWDSTSADDTIGTAEIPLNKVKVEGTTELDVPVEGLENAGQDGGMLHLAFSFKPRYTISVSKREKKVGDIASKGLGTGLKAGTTVIGGGVGAIGKIKKGVFGGLGSLTNHKKNHEMGEEETKF.

Positions 1–50 (MAKEDTGVTAPKKPETAQVANINGIDKLEPPKTKEETESSKSVSSEKAAH) are disordered. At 1-106 (MAKEDTGVTA…NIIPDSLYGD (106 aa)) the chain is on the cytoplasmic side. Over residues 26 to 39 (DKLEPPKTKEETES) the composition is skewed to basic and acidic residues. The chain crosses the membrane as a helical span at residues 107 to 127 (WYHSVAIFFIGGVASFALGHY). Lys128 is a topological domain (extracellular). A helical membrane pass occupies residues 129-149 (FSMGSAFFVIVITSLLYRTSA). The Cytoplasmic portion of the chain corresponds to 150-1186 (KKYRGSIREL…HEMGEEETKF (1037 aa)). The 204-residue stretch at 172–375 (DYESLEWLNA…PPFSLQLNIP (204 aa)) folds into the SMP-LTD domain. C2 domains follow at residues 366-487 (PPFS…RNLK), 512-636 (EKKL…IKIT), and 640-757 (RPVR…DKYE). Residues 795 to 822 (LEEIQDLDKVNKKKKALELRKSAIDEKK) are a coiled coil. One can recognise a C2 4 domain in the interval 976-1094 (PIDTKQLPAN…KVEGTTELDV (119 aa)). At Ser1000 the chain carries Phosphoserine. Residues Asp1008, Asp1014, Asp1064, Asp1066, Ser1069, and Asp1072 each contribute to the Ca(2+) site.

The protein belongs to the tricalbin family. Interacts with TCB2 via its C-terminal domain. Ca(2+) is required as a cofactor.

Its subcellular location is the cell membrane. It is found in the endoplasmic reticulum membrane. In terms of biological role, may play a role in membrane trafficking. In Saccharomyces cerevisiae (strain ATCC 204508 / S288c) (Baker's yeast), this protein is Tricalbin-1 (TCB1).